A 273-amino-acid chain; its full sequence is Neuferricin (273 aa).

The N-terminal stretch at 1-22 (MLGYLAAAALCLAAVLLMRLDH) is a signal peptide. The Cytochrome b5 heme-binding domain maps to 44–143 (GRLMSKEELS…QNYITIGKLT (100 aa)).

Belongs to the cytochrome b5 family. MAPR subfamily.

It localises to the secreted. Heme-binding protein which promotes neuronal but not astrocyte differentiation. The sequence is that of Neuferricin (cyb5d2) from Xenopus tropicalis (Western clawed frog).